We begin with the raw amino-acid sequence, 95 residues long: UPF0235 protein A2cp1_1215 (95 aa).

The protein belongs to the UPF0235 family.

This chain is UPF0235 protein A2cp1_1215, found in Anaeromyxobacter dehalogenans (strain 2CP-1 / ATCC BAA-258).